A 427-amino-acid polypeptide reads, in one-letter code: Ribitol transporter (427 aa).

The Cytoplasmic segment spans residues methionine 1–glutamine 7. A helical transmembrane segment spans residues tryptophan 8–glycine 28. Over aspartate 29–serine 51 the chain is Extracellular. A helical transmembrane segment spans residues phenylalanine 52–alanine 72. The Cytoplasmic segment spans residues glutamate 73–lysine 79. A helical transmembrane segment spans residues alanine 80–leucine 100. At glycine 101–leucine 107 the chain is on the extracellular side. A helical transmembrane segment spans residues isoleucine 108–valine 128. Over alanine 129 to serine 141 the chain is Cytoplasmic. A helical transmembrane segment spans residues alanine 142–proline 162. At serine 163–glutamate 171 the chain is on the extracellular side. A helical transmembrane segment spans residues methionine 172 to serine 192. The Cytoplasmic portion of the chain corresponds to methionine 193–threonine 238. Residues leucine 239–threonine 259 traverse the membrane as a helical segment. Residues threonine 260–tryptophan 263 are Extracellular-facing. The chain crosses the membrane as a helical span at residues leucine 264–valine 284. Topologically, residues alanine 285–arginine 295 are cytoplasmic. Residues tryptophan 296–phenylalanine 316 form a helical membrane-spanning segment. The Extracellular portion of the chain corresponds to glycine 317–alanine 323. Residues leucine 324 to phenylalanine 344 form a helical membrane-spanning segment. Over proline 345 to asparagine 360 the chain is Cytoplasmic. Residues leucine 361 to phenylalanine 381 form a helical membrane-spanning segment. Residues serine 382–threonine 383 are Extracellular-facing. Residues isoleucine 384–isoleucine 404 traverse the membrane as a helical segment. The Cytoplasmic portion of the chain corresponds to arginine 405–serine 427.

It belongs to the major facilitator superfamily. Sugar transporter (TC 2.A.1.1) family. CsbX subfamily.

It localises to the cell membrane. This chain is Ribitol transporter (rbtT), found in Klebsiella pneumoniae.